An 862-amino-acid polypeptide reads, in one-letter code: Squamosa promoter-binding-like protein 1 (862 aa).

A disordered region spans residues 55-98 (KRRRVSPEDDDGEECINAATTNGDDGQISGQRGRSSEDEMPRQG). Residues 72–87 (AATTNGDDGQISGQRG) show a composition bias toward polar residues. The SBP-type zinc finger occupies 104 to 181 (GPCCQVDGCT…AQHNRRRRKV (78 aa)). Zn(2+) is bound by residues C107, C112, C129, H132, C148, C151, H155, and C167. The Bipartite nuclear localization signal motif lies at 164–180 (KKSCRSRLAQHNRRRRK).

Ubiquitous.

It localises to the nucleus. Its function is as follows. Trans-acting factor that binds specifically to the consensus nucleotide sequence 5'-TNCGTACAA-3'. The protein is Squamosa promoter-binding-like protein 1 (SPL1) of Oryza sativa subsp. japonica (Rice).